The chain runs to 216 residues: MSLPMLQVALDNQTMDSAYETTRLIAEEVDIIEVGTILCVGEGVRAVRDLKALYPHKIVLADAKIADAGKILSRMCFEANADWVTVICCADINTAKGALDVAKEFNGDVQIELTGYWTWEQAQQWRDAGIQQVVYHRSCDAQAAGVAWGEADITAIKRLSDMGFKVTVTGGLALEDLPLFKGIPIHVFIAGRSIRDAESPVEAARQFKRSIAQLWG.

Residue Asp11 coordinates substrate. Residues Glu33 and Asp62 each coordinate Mg(2+). Arg192 contributes to the substrate binding site.

This sequence belongs to the HPS/KGPDC family. KGPDC subfamily. As to quaternary structure, homodimer. Mg(2+) serves as cofactor.

It catalyses the reaction 3-dehydro-L-gulonate 6-phosphate + H(+) = L-xylulose 5-phosphate + CO2. It participates in cofactor degradation; L-ascorbate degradation; D-xylulose 5-phosphate from L-ascorbate: step 2/4. Functionally, catalyzes the decarboxylation of 3-keto-L-gulonate-6-P into L-xylulose-5-P. Is involved in the anaerobic L-ascorbate utilization. This is 3-keto-L-gulonate-6-phosphate decarboxylase UlaD from Salmonella typhi.